Here is a 402-residue protein sequence, read N- to C-terminus: Imidazolonepropionase (402 aa).

Residues histidine 66 and histidine 68 each coordinate Fe(3+). Residues histidine 66 and histidine 68 each coordinate Zn(2+). 4-imidazolone-5-propanoate is bound by residues arginine 75, tyrosine 138, and histidine 171. An N-formimidoyl-L-glutamate-binding site is contributed by tyrosine 138. A Fe(3+)-binding site is contributed by histidine 236. Residue histidine 236 coordinates Zn(2+). A 4-imidazolone-5-propanoate-binding site is contributed by glutamine 239. Aspartate 311 is a Fe(3+) binding site. Aspartate 311 serves as a coordination point for Zn(2+). Positions 313 and 315 each coordinate N-formimidoyl-L-glutamate. Position 316 (threonine 316) interacts with 4-imidazolone-5-propanoate.

The protein belongs to the metallo-dependent hydrolases superfamily. HutI family. Zn(2+) serves as cofactor. The cofactor is Fe(3+).

Its subcellular location is the cytoplasm. It carries out the reaction 4-imidazolone-5-propanoate + H2O = N-formimidoyl-L-glutamate. The protein operates within amino-acid degradation; L-histidine degradation into L-glutamate; N-formimidoyl-L-glutamate from L-histidine: step 3/3. Functionally, catalyzes the hydrolytic cleavage of the carbon-nitrogen bond in imidazolone-5-propanoate to yield N-formimidoyl-L-glutamate. It is the third step in the universal histidine degradation pathway. This is Imidazolonepropionase from Pseudomonas aeruginosa (strain LESB58).